We begin with the raw amino-acid sequence, 270 residues long: Phosphatidylglycerol--prolipoprotein diacylglyceryl transferase (270 aa).

The next 4 helical transmembrane spans lie at 19–39, 56–76, 92–112, and 116–136; these read FPVY…LWLA, LVLI…VIFE, QGGL…ILFA, and GVSF…GQAI. Position 138 (Arg-138) interacts with a 1,2-diacyl-sn-glycero-3-phospho-(1'-sn-glycerol). 3 consecutive transmembrane segments (helical) span residues 178–198, 206–226, and 236–256; these read HPTF…LLAL, GELF…VEGL, and LRIA…FIIV.

The protein belongs to the Lgt family.

Its subcellular location is the cell membrane. It carries out the reaction L-cysteinyl-[prolipoprotein] + a 1,2-diacyl-sn-glycero-3-phospho-(1'-sn-glycerol) = an S-1,2-diacyl-sn-glyceryl-L-cysteinyl-[prolipoprotein] + sn-glycerol 1-phosphate + H(+). It participates in protein modification; lipoprotein biosynthesis (diacylglyceryl transfer). Catalyzes the transfer of the diacylglyceryl group from phosphatidylglycerol to the sulfhydryl group of the N-terminal cysteine of a prolipoprotein, the first step in the formation of mature lipoproteins. The protein is Phosphatidylglycerol--prolipoprotein diacylglyceryl transferase of Bacillus cereus (strain Q1).